A 279-amino-acid chain; its full sequence is Acyl-coenzyme A thioesterase MBLAC2 (279 aa).

An N-acetylserine modification is found at S2. Zn(2+) is bound by residues H83, H85, D87, H88, H170, D189, and H231. The S-palmitoyl cysteine moiety is linked to residue C254.

This sequence belongs to the metallo-beta-lactamase superfamily. Glyoxalase II family. Zn(2+) is required as a cofactor. In terms of processing, palmitoylated on Cys-254 by ZDHHC20.

The protein resides in the endoplasmic reticulum membrane. It is found in the cell membrane. The catalysed reaction is hexadecanoyl-CoA + H2O = hexadecanoate + CoA + H(+). It carries out the reaction dodecanoyl-CoA + H2O = dodecanoate + CoA + H(+). The enzyme catalyses tetradecanoyl-CoA + H2O = tetradecanoate + CoA + H(+). It catalyses the reaction octadecanoyl-CoA + H2O = octadecanoate + CoA + H(+). The catalysed reaction is a beta-lactam + H2O = a substituted beta-amino acid. Its activity is regulated as follows. Beta-lactamase activity is inhibited by sulbactam. In terms of biological role, acyl-CoA thioesterases are a group of enzymes that catalyze the hydrolysis of acyl-CoAs to the free fatty acid and coenzyme A (CoASH), providing the potential to regulate intracellular levels of acyl-CoAs, free fatty acids and CoASH. Has an acyl-CoA thioesterase activity towards the long chain fatty acyl-CoA thioester palmitoyl-CoA (hexadecanoyl-CoA; C16:0-CoA). Displays a substrate preference for fatty acyl-CoAs with chain-lengths C12-C18. Possesses beta-lactamase activity, catalyzing the hydrolysis of penicillin G and nitrocefin. Exhibits no activity towards other beta-lactam antibiotic classes including cephalosporins (cefotaxime) and carbapenems (imipenem). The sequence is that of Acyl-coenzyme A thioesterase MBLAC2 (MBLAC2) from Homo sapiens (Human).